Consider the following 684-residue polypeptide: DNA ligase (684 aa).

NAD(+)-binding positions include 48-52, 97-98, and E129; these read DYEYD and SL. K131 serves as the catalytic N6-AMP-lysine intermediate. Residues R152, E189, K310, and K334 each contribute to the NAD(+) site. C429, C432, C447, and C452 together coordinate Zn(2+). Residues 609–684 enclose the BRCT domain; sequence AQEGSLSGMS…ISWEELQAMI (76 aa).

Belongs to the NAD-dependent DNA ligase family. LigA subfamily. Mg(2+) is required as a cofactor. The cofactor is Mn(2+).

The enzyme catalyses NAD(+) + (deoxyribonucleotide)n-3'-hydroxyl + 5'-phospho-(deoxyribonucleotide)m = (deoxyribonucleotide)n+m + AMP + beta-nicotinamide D-nucleotide.. Its function is as follows. DNA ligase that catalyzes the formation of phosphodiester linkages between 5'-phosphoryl and 3'-hydroxyl groups in double-stranded DNA using NAD as a coenzyme and as the energy source for the reaction. It is essential for DNA replication and repair of damaged DNA. This Bdellovibrio bacteriovorus (strain ATCC 15356 / DSM 50701 / NCIMB 9529 / HD100) protein is DNA ligase.